A 78-amino-acid chain; its full sequence is Small ribosomal subunit protein bS18 (78 aa).

The protein belongs to the bacterial ribosomal protein bS18 family. In terms of assembly, part of the 30S ribosomal subunit. Forms a tight heterodimer with protein bS6.

Its function is as follows. Binds as a heterodimer with protein bS6 to the central domain of the 16S rRNA, where it helps stabilize the platform of the 30S subunit. The polypeptide is Small ribosomal subunit protein bS18 (Limosilactobacillus fermentum (strain NBRC 3956 / LMG 18251) (Lactobacillus fermentum)).